Here is an 819-residue protein sequence, read N- to C-terminus: Proteome of basal body protein 15 (819 aa).

Low complexity-rich tracts occupy residues 46 to 59 and 572 to 581; these read PASS…NPGR and RQQQQQQQHT. 2 disordered regions span residues 46–72 and 564–590; these read PASS…LATG and ERQR…GGGV. A coiled-coil region spans residues 546–580; it reads YVVLREAVARVQARMEQQERQRRLLERQQQQQQQH.

The protein localises to the cytoplasm. The protein resides in the cytoskeleton. Its subcellular location is the microtubule organizing center. It localises to the centrosome. It is found in the centriole. The sequence is that of Proteome of basal body protein 15 from Chlamydomonas reinhardtii (Chlamydomonas smithii).